Reading from the N-terminus, the 236-residue chain is GLIPR1-like protein 1 (236 aa).

The first 27 residues, 1 to 27, serve as a signal peptide directing secretion; it reads MALKKKLNFLWTLVLYLIASRLPKAFG. The SCP domain occupies 46–178; sequence LNIHNELRRK…FSAGLFVCNY (133 aa). Asn126 is a glycosylation site (N-linked (GlcNAc...) asparagine).

It belongs to the CRISP family. Part of a oolemmal binding multimeric complex (IZUMO1 complex) composed at least of IZUMO1 and GLIPR1L1; the complex assemblage is influenced by the maturation status of the male germ cell. Interacts with IZUMO1. In terms of processing, N-glycosylated. N-glycosylation decreases during the transit in the caput. In terms of tissue distribution, expressed in testis (at protein level). Little or no expression in other tissues tested.

It localises to the cytoplasmic vesicle. It is found in the secretory vesicle. Its subcellular location is the acrosome. The protein localises to the cell membrane. The protein resides in the membrane raft. It localises to the secreted. Required for optimal fertilization at the stage of sperm-oocyte fusion, plays a role in optimizing acrosome function, the translocation of IZUMO1 during the acrosome reaction and the fertilization process. Component of epididymosomes, one type of membranous microvesicules which mediate the transfer of lipids and proteins to spermatozoa plasma membrane during epididymal maturation. Also component of the CD9-positive microvesicules found in the cauda region. The polypeptide is GLIPR1-like protein 1 (Mus musculus (Mouse)).